The chain runs to 317 residues: Ribosomal protein L11 methyltransferase (317 aa).

4 residues coordinate S-adenosyl-L-methionine: T139, G162, D184, and N226. Positions 274-297 (EHVATRPDPASPGGDRRAGRGDAG) are disordered.

Belongs to the methyltransferase superfamily. PrmA family.

The protein resides in the cytoplasm. The enzyme catalyses L-lysyl-[protein] + 3 S-adenosyl-L-methionine = N(6),N(6),N(6)-trimethyl-L-lysyl-[protein] + 3 S-adenosyl-L-homocysteine + 3 H(+). Functionally, methylates ribosomal protein L11. The sequence is that of Ribosomal protein L11 methyltransferase from Sorangium cellulosum (strain So ce56) (Polyangium cellulosum (strain So ce56)).